Consider the following 401-residue polypeptide: Argininosuccinate synthase (401 aa).

Residues 7-15 (AYSGGLDTS) and A34 contribute to the ATP site. Positions 85 and 90 each coordinate L-citrulline. G115 provides a ligand contact to ATP. T117, N121, and D122 together coordinate L-aspartate. N121 contributes to the L-citrulline binding site. 5 residues coordinate L-citrulline: R125, S174, S183, E259, and Y271.

It belongs to the argininosuccinate synthase family. Type 1 subfamily. Homotetramer.

The protein resides in the cytoplasm. It carries out the reaction L-citrulline + L-aspartate + ATP = 2-(N(omega)-L-arginino)succinate + AMP + diphosphate + H(+). The protein operates within amino-acid biosynthesis; L-arginine biosynthesis; L-arginine from L-ornithine and carbamoyl phosphate: step 2/3. The chain is Argininosuccinate synthase from Desulforamulus reducens (strain ATCC BAA-1160 / DSM 100696 / MI-1) (Desulfotomaculum reducens).